The primary structure comprises 114 residues: PDZK1-interacting protein 1 (114 aa).

The Extracellular segment spans residues 1–28 (MSALSLVILGLLMAVPPASCQQGLGNLQ). A helical membrane pass occupies residues 29–51 (PWMQGLIAVAVFLVLVAIAFAIN). At 52-114 (HFWCQEEREP…EEGRVHSTPM (63 aa)) the chain is on the cytoplasmic side. S85 is subject to Phosphoserine. A disordered region spans residues 92–114 (SNEHENAYENTSEEEGRVHSTPM). A compositionally biased stretch (basic and acidic residues) spans 105–114 (EEGRVHSTPM).

The protein belongs to the PDZK1-interacting protein 1/SMIM24 family. In terms of assembly, forms a heterodimer (via N-terminal transmembrane helix) with SLC5A2/SGLT2 (via TM13); this interaction enhances SLC5A2 transporter activity. Interacts with PDZK1.

The protein resides in the apical cell membrane. Functionally, auxiliary protein of electrogenic Na(+)-coupled sugar symporter SLC5A2/SGLT2 and SLC5A1/SGLT1. Essential for the transporter activity of SLC5A2/SGLT2 but not SLC5A1/SGLT1. The polypeptide is PDZK1-interacting protein 1 (Sus scrofa (Pig)).